The chain runs to 185 residues: Ribosome-recycling factor (185 aa).

Belongs to the RRF family.

The protein localises to the cytoplasm. Responsible for the release of ribosomes from messenger RNA at the termination of protein biosynthesis. May increase the efficiency of translation by recycling ribosomes from one round of translation to another. This Pseudomonas savastanoi pv. phaseolicola (strain 1448A / Race 6) (Pseudomonas syringae pv. phaseolicola (strain 1448A / Race 6)) protein is Ribosome-recycling factor.